Here is a 273-residue protein sequence, read N- to C-terminus: Imidazole glycerol phosphate synthase subunit HisF (273 aa).

Catalysis depends on residues D12 and D136.

Belongs to the HisA/HisF family. As to quaternary structure, heterodimer of HisH and HisF.

It is found in the cytoplasm. The catalysed reaction is 5-[(5-phospho-1-deoxy-D-ribulos-1-ylimino)methylamino]-1-(5-phospho-beta-D-ribosyl)imidazole-4-carboxamide + L-glutamine = D-erythro-1-(imidazol-4-yl)glycerol 3-phosphate + 5-amino-1-(5-phospho-beta-D-ribosyl)imidazole-4-carboxamide + L-glutamate + H(+). It participates in amino-acid biosynthesis; L-histidine biosynthesis; L-histidine from 5-phospho-alpha-D-ribose 1-diphosphate: step 5/9. Its function is as follows. IGPS catalyzes the conversion of PRFAR and glutamine to IGP, AICAR and glutamate. The HisF subunit catalyzes the cyclization activity that produces IGP and AICAR from PRFAR using the ammonia provided by the HisH subunit. The sequence is that of Imidazole glycerol phosphate synthase subunit HisF from Halobacterium salinarum (strain ATCC 29341 / DSM 671 / R1).